Consider the following 307-residue polypeptide: Taste receptor type 2 member 41 (307 aa).

Residues 1–7 are Extracellular-facing; sequence MQAALTA. A helical transmembrane segment spans residues 8-28; that stretch reads FFMLLFSLLSLLGIAANGFIV. At 29-40 the chain is on the cytoplasmic side; it reads LVLGREWLRYGR. Residues 41 to 61 form a helical membrane-spanning segment; the sequence is LLPLDMILISLGASRFCLQLV. The Extracellular segment spans residues 62–88; the sequence is GTVHNFYYSAQKVEYSGGLGRQFFHLH. A helical membrane pass occupies residues 89-109; that stretch reads WHFLNSATFWFCSWLSVLFCV. The Cytoplasmic segment spans residues 110–129; the sequence is KIANITHPTFLWLKWRFPAW. Residues 130 to 150 traverse the membrane as a helical segment; that stretch reads VPWLLLGSVLISFIITLLFFW. The Extracellular portion of the chain corresponds to 151-183; sequence VNYPAYQEFLIRKFSVNMTYKWNTRIETYYFPS. Asn-167 carries an N-linked (GlcNAc...) asparagine glycan. The chain crosses the membrane as a helical span at residues 184 to 204; the sequence is LKLVIWSIPFSVFLVSIMLLI. Residues 205–234 are Cytoplasmic-facing; sequence NSLRRHTQRMQHNGHSLQDPSTQAHTRALK. Residues 235–255 traverse the membrane as a helical segment; the sequence is SLISFLILYALSFLSLIIDAT. Residues 256–264 lie on the Extracellular side of the membrane; the sequence is KFISMQNDF. A helical membrane pass occupies residues 265 to 285; that stretch reads YWPWQIAVYLCISIHPFILIF. Topologically, residues 286–307 are cytoplasmic; sequence SNLKLRSVFSQLLLLARGFWVA.

It belongs to the G-protein coupled receptor T2R family.

Its subcellular location is the membrane. In terms of biological role, receptor that may play a role in the perception of bitterness and is gustducin-linked. May play a role in sensing the chemical composition of the gastrointestinal content. The activity of this receptor may stimulate alpha gustducin, mediate PLC-beta-2 activation and lead to the gating of TRPM5. The protein is Taste receptor type 2 member 41 (TAS2R41) of Pan paniscus (Pygmy chimpanzee).